The primary structure comprises 499 residues: Ethanolamine-phosphate phospho-lyase (499 aa).

Lys278 carries the N6-(pyridoxal phosphate)lysine modification. Residues 468–479 (RDSTTDSKENPS) show a composition bias toward basic and acidic residues. The segment at 468 to 499 (RDSTTDSKENPSRKRNGMCTDTHSLLSKRLKT) is disordered.

It belongs to the class-III pyridoxal-phosphate-dependent aminotransferase family. Homotetramer. Requires pyridoxal 5'-phosphate as cofactor.

Its subcellular location is the mitochondrion. It carries out the reaction phosphoethanolamine + H2O = acetaldehyde + NH4(+) + phosphate. In terms of biological role, catalyzes the pyridoxal-phosphate-dependent breakdown of phosphoethanolamine, converting it to ammonia, inorganic phosphate and acetaldehyde. The sequence is that of Ethanolamine-phosphate phospho-lyase (ETNPPL) from Homo sapiens (Human).